A 246-amino-acid polypeptide reads, in one-letter code: UDP-2,3-diacylglucosamine hydrolase (246 aa).

The Mn(2+) site is built by aspartate 8, histidine 10, aspartate 41, asparagine 79, and histidine 114. Position 79–80 (79–80) interacts with substrate; sequence NR. Residues aspartate 122, serine 160, asparagine 164, lysine 167, and histidine 195 each contribute to the substrate site. The Mn(2+) site is built by histidine 195 and histidine 197.

It belongs to the LpxH family. Requires Mn(2+) as cofactor.

It is found in the cell inner membrane. It carries out the reaction UDP-2-N,3-O-bis[(3R)-3-hydroxytetradecanoyl]-alpha-D-glucosamine + H2O = 2-N,3-O-bis[(3R)-3-hydroxytetradecanoyl]-alpha-D-glucosaminyl 1-phosphate + UMP + 2 H(+). It participates in glycolipid biosynthesis; lipid IV(A) biosynthesis; lipid IV(A) from (3R)-3-hydroxytetradecanoyl-[acyl-carrier-protein] and UDP-N-acetyl-alpha-D-glucosamine: step 4/6. Functionally, hydrolyzes the pyrophosphate bond of UDP-2,3-diacylglucosamine to yield 2,3-diacylglucosamine 1-phosphate (lipid X) and UMP by catalyzing the attack of water at the alpha-P atom. Involved in the biosynthesis of lipid A, a phosphorylated glycolipid that anchors the lipopolysaccharide to the outer membrane of the cell. This chain is UDP-2,3-diacylglucosamine hydrolase, found in Chromohalobacter salexigens (strain ATCC BAA-138 / DSM 3043 / CIP 106854 / NCIMB 13768 / 1H11).